We begin with the raw amino-acid sequence, 112 residues long: Nucleoid-associated protein lpg2755 (112 aa).

Belongs to the YbaB/EbfC family. Homodimer.

Its subcellular location is the cytoplasm. The protein resides in the nucleoid. In terms of biological role, binds to DNA and alters its conformation. May be involved in regulation of gene expression, nucleoid organization and DNA protection. In Legionella pneumophila subsp. pneumophila (strain Philadelphia 1 / ATCC 33152 / DSM 7513), this protein is Nucleoid-associated protein lpg2755.